Reading from the N-terminus, the 576-residue chain is uncharacterized protein (576 aa).

An N-terminal signal peptide occupies residues 1–28; that stretch reads MLRLNGLRVLLRTLAAIGALLTTASASA. Ser-185 functions as the Acyl-ester intermediate in the catalytic mechanism. 2 cysteine pairs are disulfide-bonded: Cys-252–Cys-269 and Cys-278–Cys-286. Residues Asp-253, Asp-256, Asp-260, and Val-262 each coordinate Ca(2+). Residues Asp-414 and His-464 each act as charge relay system in the active site. Cysteines 529 and 551 form a disulfide.

This sequence belongs to the tannase family.

This is an uncharacterized protein from Xanthomonas campestris pv. campestris (strain ATCC 33913 / DSM 3586 / NCPPB 528 / LMG 568 / P 25).